A 131-amino-acid chain; its full sequence is Large ribosomal subunit protein bL19 (131 aa).

Residues 110-131 (KSARIAERTDDRAKKAKATAAE) are disordered. Basic and acidic residues predominate over residues 113–122 (RIAERTDDRA).

The protein belongs to the bacterial ribosomal protein bL19 family.

Functionally, this protein is located at the 30S-50S ribosomal subunit interface and may play a role in the structure and function of the aminoacyl-tRNA binding site. In Azorhizobium caulinodans (strain ATCC 43989 / DSM 5975 / JCM 20966 / LMG 6465 / NBRC 14845 / NCIMB 13405 / ORS 571), this protein is Large ribosomal subunit protein bL19.